Reading from the N-terminus, the 536-residue chain is Serine protease inhibitor 28Dc (536 aa).

The N-terminal stretch at 1–16 is a signal peptide; it reads MWRLLLALLLVSSVCC. Asn-355 is a glycosylation site (N-linked (GlcNAc...) asparagine).

It belongs to the serpin family.

It is found in the secreted. Serine protease inhibitor which is required for pupal viability and plays an essential role in regulating the melanization reaction. Inhibits spontaneous melanization and appears to be involved in the melanization immune response to physical wounding in larvae and adults. Acts by negatively regulating the Hayan-phenoloxidase (PPO1) cascade in the hemolymph and possibly the trachea. May function by controlling the initial release of the activated form of PPO1, phenoloxidase (PO) and thus maintains PO availability for processes such as wound response and pigmentation. In Drosophila melanogaster (Fruit fly), this protein is Serine protease inhibitor 28Dc.